Here is a 312-residue protein sequence, read N- to C-terminus: Ribosomal RNA small subunit methyltransferase H (312 aa).

Residues 38 to 40, Asp58, Phe84, Asp104, and Gln111 contribute to the S-adenosyl-L-methionine site; that span reads GGH.

It belongs to the methyltransferase superfamily. RsmH family.

The protein resides in the cytoplasm. The enzyme catalyses cytidine(1402) in 16S rRNA + S-adenosyl-L-methionine = N(4)-methylcytidine(1402) in 16S rRNA + S-adenosyl-L-homocysteine + H(+). Specifically methylates the N4 position of cytidine in position 1402 (C1402) of 16S rRNA. In Alcanivorax borkumensis (strain ATCC 700651 / DSM 11573 / NCIMB 13689 / SK2), this protein is Ribosomal RNA small subunit methyltransferase H.